The following is a 195-amino-acid chain: ATP-dependent Clp protease proteolytic subunit (195 aa).

Residue Ser102 is the Nucleophile of the active site. Residue His125 is part of the active site.

The protein belongs to the peptidase S14 family. As to quaternary structure, component of the chloroplastic Clp protease core complex.

It is found in the plastid. Its subcellular location is the chloroplast stroma. It catalyses the reaction Hydrolysis of proteins to small peptides in the presence of ATP and magnesium. alpha-casein is the usual test substrate. In the absence of ATP, only oligopeptides shorter than five residues are hydrolyzed (such as succinyl-Leu-Tyr-|-NHMec, and Leu-Tyr-Leu-|-Tyr-Trp, in which cleavage of the -Tyr-|-Leu- and -Tyr-|-Trp bonds also occurs).. Its function is as follows. Cleaves peptides in various proteins in a process that requires ATP hydrolysis. Has a chymotrypsin-like activity. Plays a major role in the degradation of misfolded proteins. This chain is ATP-dependent Clp protease proteolytic subunit, found in Phaseolus vulgaris (Kidney bean).